The following is a 345-amino-acid chain: MDENKKRALAAALGQIEKQFGKGSVMRMGDRVVEPVEAIPTGSLMLDIALGIGGLPKGRVVEIYGPESSGKTTLTLQAIAECQKMGGTAAFIDAEHALDPIYAAKLGVNVDDLLLSQPDTGEQALEIADMLVRSGSVDILVIDSVAALTPKAEIEGEMGDQLPGLQARLMSQALRKLTGNIKRSNTLVIFINQLRMKIGVMMPGQSPETTTGGNALKFYASVRLDIRRIGAIKKGDEIIGNQTKIKVVKNKLAPPFKQVITEILYGEGISREGELIDMGVDAKLVEKAGAWYSYGEERIGQGKDNARGYLRDNPTVAAKLEAELREKFQPAEAAREEGDDEGEDE.

Residue 65–72 (GPESSGKT) participates in ATP binding. Basic and acidic residues predominate over residues 326 to 336 (EKFQPAEAARE). A disordered region spans residues 326-345 (EKFQPAEAAREEGDDEGEDE).

It belongs to the RecA family.

It localises to the cytoplasm. Its function is as follows. Can catalyze the hydrolysis of ATP in the presence of single-stranded DNA, the ATP-dependent uptake of single-stranded DNA by duplex DNA, and the ATP-dependent hybridization of homologous single-stranded DNAs. It interacts with LexA causing its activation and leading to its autocatalytic cleavage. This is Protein RecA from Stenotrophomonas maltophilia (strain K279a).